Consider the following 109-residue polypeptide: T cell receptor alpha variable 25 (109 aa).

Residues 1–19 (MLLITSMLVLWMQLSQVNG) form the signal peptide. The region spanning 20–109 (QQVMQIPQYQ…TDVGTYFCAG (90 aa)) is the Ig-like domain. A disulfide bridge links C41 with C107. Residues N42 and N89 are each glycosylated (N-linked (GlcNAc...) asparagine).

As to quaternary structure, alpha-beta TR is a heterodimer composed of an alpha and beta chain; disulfide-linked. The alpha-beta TR is associated with the transmembrane signaling CD3 coreceptor proteins to form the TR-CD3 (TcR or TCR). The assembly of alpha-beta TR heterodimers with CD3 occurs in the endoplasmic reticulum where a single alpha-beta TR heterodimer associates with one CD3D-CD3E heterodimer, one CD3G-CD3E heterodimer and one CD247 homodimer forming a stable octameric structure. CD3D-CD3E and CD3G-CD3E heterodimers preferentially associate with TR alpha and TR beta chains, respectively. The association of the CD247 homodimer is the last step of TcR assembly in the endoplasmic reticulum and is required for transport to the cell surface.

Its subcellular location is the cell membrane. Functionally, v region of the variable domain of T cell receptor (TR) alpha chain that participates in the antigen recognition. Alpha-beta T cell receptors are antigen specific receptors which are essential to the immune response and are present on the cell surface of T lymphocytes. Recognize peptide-major histocompatibility (MH) (pMH) complexes that are displayed by antigen presenting cells (APC), a prerequisite for efficient T cell adaptive immunity against pathogens. Binding of alpha-beta TR to pMH complex initiates TR-CD3 clustering on the cell surface and intracellular activation of LCK that phosphorylates the ITAM motifs of CD3G, CD3D, CD3E and CD247 enabling the recruitment of ZAP70. In turn ZAP70 phosphorylates LAT, which recruits numerous signaling molecules to form the LAT signalosome. The LAT signalosome propagates signal branching to three major signaling pathways, the calcium, the mitogen-activated protein kinase (MAPK) kinase and the nuclear factor NF-kappa-B (NF-kB) pathways, leading to the mobilization of transcription factors that are critical for gene expression and essential for T cell growth and differentiation. The T cell repertoire is generated in the thymus, by V-(D)-J rearrangement. This repertoire is then shaped by intrathymic selection events to generate a peripheral T cell pool of self-MH restricted, non-autoaggressive T cells. Post-thymic interaction of alpha-beta TR with the pMH complexes shapes TR structural and functional avidity. The polypeptide is T cell receptor alpha variable 25 (Homo sapiens (Human)).